The primary structure comprises 206 residues: Putative cryptic phosphonate transport system permease protein PhnE1 (206 aa).

Transmembrane regions (helical) follow at residues Trp30–Ala50, Ile92–Ala112, and Met137–Ala157.

In terms of assembly, if the reading frame is restored, the complex is composed of two ATP-binding proteins (PhnC), two transmembrane proteins (PhnE) and a solute-binding protein (PhnD).

The protein localises to the cell inner membrane. In terms of biological role, N-terminal fragment of the PhnE protein, part of a phosphonate usage operon that is cryptic in K12 strains. Growth of K12 strains on phosphonate can be observed when it is used as the sole phosphorus source after a 60 hour lag period, suggesting the operon is activated. An intact PhnE in strain B is (AC A0A140NFA3). Part of the binding-protein-dependent transport system for phosphonates; probably responsible for the translocation of the substrate across the membrane. The polypeptide is Putative cryptic phosphonate transport system permease protein PhnE1 (phnE1) (Escherichia coli (strain K12)).